The primary structure comprises 265 residues: 3'(2'),5'-bisphosphate nucleotidase CysQ (265 aa).

Residues glutamate 80, aspartate 99, leucine 101, aspartate 102, and aspartate 222 each contribute to the Mg(2+) site. Residue glutamate 80 participates in substrate binding. Substrate-binding positions include 101–104 (LDGT) and aspartate 222.

Belongs to the inositol monophosphatase superfamily. CysQ family. Mg(2+) is required as a cofactor.

It is found in the cell inner membrane. The catalysed reaction is adenosine 3',5'-bisphosphate + H2O = AMP + phosphate. In terms of biological role, converts adenosine-3',5'-bisphosphate (PAP) to AMP. The protein is 3'(2'),5'-bisphosphate nucleotidase CysQ of Buchnera aphidicola subsp. Acyrthosiphon pisum (strain APS) (Acyrthosiphon pisum symbiotic bacterium).